Reading from the N-terminus, the 214-residue chain is N-(5'-phosphoribosyl)anthranilate isomerase (214 aa).

It belongs to the TrpF family.

It carries out the reaction N-(5-phospho-beta-D-ribosyl)anthranilate = 1-(2-carboxyphenylamino)-1-deoxy-D-ribulose 5-phosphate. It participates in amino-acid biosynthesis; L-tryptophan biosynthesis; L-tryptophan from chorismate: step 3/5. The sequence is that of N-(5'-phosphoribosyl)anthranilate isomerase from Halorubrum lacusprofundi (strain ATCC 49239 / DSM 5036 / JCM 8891 / ACAM 34).